We begin with the raw amino-acid sequence, 288 residues long: MGMGFNPIKALFTGIGTVCVGVGALLSILCIINQTQHNIAFQNIYFIQLNTTSIFSVANQTAVVNNTSNLLNELTGTLVDTLETYIDQGATDLIEQVEQEMKDVSELPDWYSIGLWNYCQGNSSDYTNPTYCSTPSPSYYFNPLTMLETSINNATGSQINITLPSEVDLGLKVLKGACYAMRAMYILGFIFFALTIVSIVISCLPFFGPLFLNVFSFFATIFTFIAAVIAVATYRIAISELEKNIEILNIPIVLGKKIYAYSFLSAAAGLAACILYFIGNLTSGYSPL.

The Cytoplasmic portion of the chain corresponds to 1-11; sequence MGMGFNPIKAL. The helical transmembrane segment at 12–32 threads the bilayer; that stretch reads FTGIGTVCVGVGALLSILCII. N33, N50, N59, N66, N122, N153, and N160 each carry an N-linked (GlcNAc...) asparagine glycan. Topologically, residues 33 to 185 are extracellular; sequence NQTQHNIAFQ…GACYAMRAMY (153 aa). A helical membrane pass occupies residues 186 to 206; sequence ILGFIFFALTIVSIVISCLPF. The Cytoplasmic segment spans residues 207-210; it reads FGPL. The helical transmembrane segment at 211–231 threads the bilayer; the sequence is FLNVFSFFATIFTFIAAVIAV. Topologically, residues 232-257 are extracellular; the sequence is ATYRIAISELEKNIEILNIPIVLGKK. A helical transmembrane segment spans residues 258–278; sequence IYAYSFLSAAAGLAACILYFI. Over 279 to 288 the chain is Cytoplasmic; the sequence is GNLTSGYSPL.

This sequence belongs to the SUR7 family.

It localises to the golgi apparatus membrane. The protein resides in the cell membrane. It is found in the cell tip. In terms of biological role, contributes to the wild-type cellular response to nitrogen stress through signaling pathways that regulate the expression of genes involved in amino acid biosynthesis. Required for wild-type filamentous growth, cell growth, and cell-cell adhesion. This Schizosaccharomyces pombe (strain 972 / ATCC 24843) (Fission yeast) protein is SUR7 family protein pun1 (pun1).